We begin with the raw amino-acid sequence, 415 residues long: Alpha-N-acetylgalactosaminidase (415 aa).

Positions M1–M17 are cleaved as a signal peptide. 3 disulfides stabilise this stretch: C38-C80, C42-C49, and C127-C158. Substrate-binding positions include D78–D79 and K154. D156 acts as the Nucleophile in catalysis. An N-linked (GlcNAc...) asparagine glycan is attached at N177. An intrachain disulfide couples C187 to C209. A substrate-binding site is contributed by S188. N-linked (GlcNAc...) asparagine glycosylation occurs at N201. Residues R213 and D217 each contribute to the substrate site. Catalysis depends on D217, which acts as the Proton donor. Phosphoserine is present on S322. Residue N330 is glycosylated (N-linked (GlcNAc...) asparagine). Residue S332 is modified to Phosphoserine. Residue N385 is glycosylated (N-linked (GlcNAc...) asparagine).

This sequence belongs to the glycosyl hydrolase 27 family. In terms of assembly, homodimer.

It is found in the lysosome. It carries out the reaction Cleavage of non-reducing alpha-(1-&gt;3)-N-acetylgalactosamine residues from human blood group A and AB mucin glycoproteins, Forssman hapten and blood group A lacto series glycolipids.. The catalysed reaction is a neolactoside IV(3)-alpha-GalNAc,IV(2)-alpha-Fuc-nLc4Cer(d18:1(4E)) + H2O = a neolactoside IV(2)-alpha-Fuc-nLc4Cer(d18:1(4E)) + N-acetyl-alpha-D-galactosamine. It catalyses the reaction a neolactoside IV(3)-alpha-GalNAc,IV(2)-alpha-Fuc-nLc4Cer(d18:0) + H2O = a neolactoside IV(2)-alpha-Fuc-nLc4Cer(d18:0) + N-acetyl-alpha-D-galactosamine. The enzyme catalyses a globoside IV3GalNAc-Gb4Cer + H2O = N-acetyl-alpha-D-galactosamine + a globoside Gb4Cer. In terms of biological role, removes terminal alpha-N-acetylgalactosamine residues from glycolipids and glycopeptides. Required for the breakdown of glycolipids. This is Alpha-N-acetylgalactosaminidase (Naga) from Rattus norvegicus (Rat).